A 263-amino-acid polypeptide reads, in one-letter code: Retinoic acid early transcript 1E (263 aa).

A signal peptide spans 1–30 (MRRISLTSSPVRLLLFLLLLLIALEIMVGG). The tract at residues 31-116 (HSLCFNFTIK…DIKPQIKTSD (86 aa)) is MHC class I alpha-1 like; down-regulates the cell surface expression of KLRK1. Residues 31-225 (HSLCFNFTIK…IHWSSSSLPD (195 aa)) lie on the Extracellular side of the membrane. N-linked (GlcNAc...) asparagine glycosylation is found at Asn36, Asn154, and Asn212. Residues 117-207 (PSTLQVEMFC…GHWEAMPEPT (91 aa)) are MHC class I alpha-2 like; down-regulates the cell surface expression of KLRK1. Cys126 and Cys189 form a disulfide bridge. Residues 226 to 248 (RWIILGAFILLVLMGIVLICVWW) traverse the membrane as a helical segment. Residues 249–263 (QNGEWQAGLWPLRTS) lie on the Cytoplasmic side of the membrane.

It belongs to the MHC class I family. Binds to KLRK1/NKG2D. As to quaternary structure, (Microbial infection) Contrary to other family members, does not interact with CMV glycoprotein UL16. In terms of tissue distribution, predominantly expressed in the skin, but also expressed in testis and trachea. Up-regulated in tumor cells of different origins. Expression progressively decreased after treatment of tumor cells with retinoic acid.

The protein localises to the membrane. It localises to the secreted. Binds and activates the KLRK1/NKG2D receptor, mediating natural killer cell cytotoxicity. This is Retinoic acid early transcript 1E from Homo sapiens (Human).